Here is a 455-residue protein sequence, read N- to C-terminus: Serine--tRNA ligase (455 aa).

Threonine 252–glutamate 254 contacts L-serine. Residues arginine 283 to glutamate 285 and valine 299 each bind ATP. Glutamate 306 contacts L-serine. Glutamate 370–serine 373 is a binding site for ATP. Threonine 406 serves as a coordination point for L-serine.

This sequence belongs to the class-II aminoacyl-tRNA synthetase family. Type-1 seryl-tRNA synthetase subfamily. As to quaternary structure, homodimer. The tRNA molecule binds across the dimer.

The protein localises to the cytoplasm. The enzyme catalyses tRNA(Ser) + L-serine + ATP = L-seryl-tRNA(Ser) + AMP + diphosphate + H(+). It carries out the reaction tRNA(Sec) + L-serine + ATP = L-seryl-tRNA(Sec) + AMP + diphosphate + H(+). It participates in aminoacyl-tRNA biosynthesis; selenocysteinyl-tRNA(Sec) biosynthesis; L-seryl-tRNA(Sec) from L-serine and tRNA(Sec): step 1/1. Its function is as follows. Catalyzes the attachment of serine to tRNA(Ser). Is also able to aminoacylate tRNA(Sec) with serine, to form the misacylated tRNA L-seryl-tRNA(Sec), which will be further converted into selenocysteinyl-tRNA(Sec). The sequence is that of Serine--tRNA ligase from Thermococcus sibiricus (strain DSM 12597 / MM 739).